Reading from the N-terminus, the 217-residue chain is Ribonuclease HII (217 aa).

Residues 27 to 216 (SRIAGVDEAG…VKESIREGIC (190 aa)) form the RNase H type-2 domain. Residues Asp-33, Glu-34, and Asp-126 each coordinate a divalent metal cation.

It belongs to the RNase HII family. The cofactor is Mn(2+). Mg(2+) serves as cofactor.

The protein localises to the cytoplasm. It carries out the reaction Endonucleolytic cleavage to 5'-phosphomonoester.. Endonuclease that specifically degrades the RNA of RNA-DNA hybrids. In Chlamydia muridarum (strain MoPn / Nigg), this protein is Ribonuclease HII (rnhB).